Reading from the N-terminus, the 372-residue chain is Methylthioribose-1-phosphate isomerase 2 (372 aa).

Asp-254 functions as the Proton donor in the catalytic mechanism.

This sequence belongs to the eIF-2B alpha/beta/delta subunits family. MtnA subfamily.

It is found in the cytoplasm. The protein localises to the nucleus. It catalyses the reaction 5-(methylsulfanyl)-alpha-D-ribose 1-phosphate = 5-(methylsulfanyl)-D-ribulose 1-phosphate. It participates in amino-acid biosynthesis; L-methionine biosynthesis via salvage pathway; L-methionine from S-methyl-5-thio-alpha-D-ribose 1-phosphate: step 1/6. Its function is as follows. Catalyzes the interconversion of methylthioribose-1-phosphate (MTR-1-P) into methylthioribulose-1-phosphate (MTRu-1-P). The sequence is that of Methylthioribose-1-phosphate isomerase 2 from Trypanosoma cruzi (strain CL Brener).